We begin with the raw amino-acid sequence, 157 residues long: Beta-defensin 125 (157 aa).

The first 20 residues, 1-20, serve as a signal peptide directing secretion; sequence MNILMLTFIICGLLTQVTKG. Disulfide bonds link Cys27–Cys55, Cys35–Cys49, and Cys39–Cys56. Positions 109–157 are disordered; sequence GETMTPETNTPETTMPPPETTTPETTMPPSETATSETMPPPSQRALTHN. Composition is skewed to low complexity over residues 110–121 and 129–145; these read ETMTPETNTPET and TTPETTMPPSETATSET.

This sequence belongs to the beta-defensin family.

Its subcellular location is the secreted. Has antibacterial activity. The protein is Beta-defensin 125 (DEFB125) of Pan troglodytes (Chimpanzee).